The chain runs to 309 residues: NAD-dependent protein deacylase sirtuin-5, mitochondrial (309 aa).

A mitochondrion-targeting transit peptide spans 1–35 (MILLPFHTRRLVSHVYCGLKPASKKKGIALEMARP). Residues 36–306 (SSNLADFREA…PPAIARHETE (271 aa)) enclose the Deacetylase sirtuin-type domain. 57-76 (GAGVSAESGVPTFRGAGGYW) is an NAD(+) binding site. Residues Tyr101 and Arg104 each contribute to the substrate site. An NAD(+)-binding site is contributed by 139–142 (QNID). His157 serves as the catalytic Proton acceptor. Residues Cys165, Cys168, Cys206, and Cys211 each coordinate Zn(2+). Residues 248–250 (GTS), 274–276 (NME), and Cys292 contribute to the NAD(+) site.

It belongs to the sirtuin family. Class III subfamily. Zn(2+) is required as a cofactor.

Its subcellular location is the mitochondrion. It is found in the cytoplasm. The protein localises to the cytosol. The protein resides in the nucleus. The catalysed reaction is N(6)-malonyl-L-lysyl-[protein] + NAD(+) + H2O = 2''-O-malonyl-ADP-D-ribose + nicotinamide + L-lysyl-[protein]. The enzyme catalyses N(6)-succinyl-L-lysyl-[protein] + NAD(+) + H2O = 2''-O-succinyl-ADP-D-ribose + nicotinamide + L-lysyl-[protein]. It catalyses the reaction N(6)-glutaryl-L-lysyl-[protein] + NAD(+) + H2O = 2''-O-glutaryl-ADP-D-ribose + nicotinamide + L-lysyl-[protein]. Functionally, NAD-dependent lysine demalonylase, desuccinylase and deglutarylase that specifically removes malonyl, succinyl and glutaryl groups on target proteins. Has weak NAD-dependent protein deacetylase activity; however this activity may not be physiologically relevant in vivo. In Xenopus tropicalis (Western clawed frog), this protein is NAD-dependent protein deacylase sirtuin-5, mitochondrial (sirt5).